The sequence spans 404 residues: G1/S-specific cyclin-E2 (404 aa).

Residues 1-44 (MSRRSSRLQAKQQPQPSQTESPQEAQIIQAKKRKTTQDVKKRRE) are disordered. Positions 12 to 26 (QQPQPSQTESPQEAQ) are enriched in low complexity. The residue at position 21 (Ser21) is a Phosphoserine. The segment covering 35-44 (TTQDVKKRRE) has biased composition (basic and acidic residues). Lys348 carries the N6-lactoyllysine modification. The residue at position 383 (Ser383) is a Phosphoserine. Position 392 is a phosphothreonine (Thr392).

The protein belongs to the cyclin family. Cyclin E subfamily. In terms of assembly, interacts with the CDK2 (in vivo) and CDK3 (in vitro) protein kinases to form a serine/threonine kinase holoenzyme complex. The cyclin subunit imparts substrate specificity to the complex. Post-translationally, phosphorylation by CDK2 triggers its release from CDK2 and degradation via the ubiquitin proteasome pathway. In terms of processing, lactylated at Lys-348. Delactylated by SIRT3. As to expression, according to PubMed:9858585, highest levels of expression in adult testis, thymus and brain. Lower levels in placenta, spleen and colon. Consistently elevated levels in tumor-derived cells compared to non-transformed proliferating cells. According to PubMed:9840927: low levels in thymus, prostate, brain, skeletal muscle, and kidney. Elevated levels in lung. According to PubMed:9840943 highly expressed in testis, placenta, thymus and brain. In a lesser extent in small intestine and colon.

The protein localises to the nucleus. Its function is as follows. Essential for the control of the cell cycle at the late G1 and early S phase. The chain is G1/S-specific cyclin-E2 (CCNE2) from Homo sapiens (Human).